The chain runs to 763 residues: MNMIEALLSMRVLFLTQVFGIFLCFPGLTKAGHLHYHSSIEVVIPMKVTEKTRGMNLPNWISYSLKLGGQRYIIHMKIKNLFLTRHLPVFTYSDQDSLLEDYPFVQDDCYYQGYVEGDSESLVSLSSCFGGFHGLLEINNIVYEIMPKKFSRKFEHLVYKVDINKTESRGSSLMQDNITCQVELQKSGNPILKQSSFEDWWTHTKIVELVVVVDKTLYDHYGNYTVMLSDLYSVINIVDTIYEVIGIKILLVGVEVWNKKNLIVIDDVSKSLRLYCRWKASNFLHRLKHDVSHLFIYRHLRGLSGIGSTGGICDPKRSCAVVTFIDRTLNLRAIGVAHHLGHNLGMKHDEDICKCSYSKCIMHMDSPPIPKFSNCSYNYFWSYTVKNTRCLMENMYTKDIFDRTRCGNGVVEDKEQCDCGSLRNCTNDLCCMSNCTLSTGSSCAFGLCCKNCQFLPSGTLCRKRDNICDLPEWCNGTSHECPDDAYVEDGIPCGVSAYCYEKQCNDRNEHCRQIFGQNAKTASVHCYREINTKGDRFGHCGLQGPTYIKCKSNDALCGRIQCDNVVQIPNMKDHSTIHFALVKNVSCWGTDYHTGTSLTDIGDVKDGTECEQNHICINRHCVHISTLDSNCTPAFCNYRGICNNKHHCHCNFHWDPPNCMIRGHGGSVDSGLPPKTNKKKHFFYLLLLQLIILACLLSCLLWLLFNIKGSKRKPQVQPTPVKTKKVSKKVPSQKPSPVPSPSLPQLRMPSRSASPTSSIKSTN.

The first 31 residues, 1–31, serve as a signal peptide directing secretion; sequence MNMIEALLSMRVLFLTQVFGIFLCFPGLTKA. Positions 32–200 are excised as a propeptide; sequence GHLHYHSSIE…ILKQSSFEDW (169 aa). 3 N-linked (GlcNAc...) asparagine glycosylation sites follow: asparagine 164, asparagine 177, and asparagine 223. Residues 201 to 684 lie on the Extracellular side of the membrane; the sequence is WTHTKIVELV…KTNKKKHFFY (484 aa). One can recognise a Peptidase M12B domain in the interval 205–396; the sequence is KIVELVVVVD…NTRCLMENMY (192 aa). Cystine bridges form between cysteine 313–cysteine 390, cysteine 353–cysteine 375, and cysteine 355–cysteine 360. N-linked (GlcNAc...) asparagine glycosylation is found at asparagine 374, asparagine 424, asparagine 434, asparagine 475, and asparagine 584. Positions 403–489 constitute a Disintegrin domain; sequence RTRCGNGVVE…ECPDDAYVED (87 aa). Residues cysteine 461 and cysteine 481 are joined by a disulfide bond. Cystine bridges form between cysteine 631-cysteine 642, cysteine 636-cysteine 648, and cysteine 650-cysteine 659. In terms of domain architecture, EGF-like spans 631–660; it reads CTPAFCNYRGICNNKHHCHCNFHWDPPNCM. The chain crosses the membrane as a helical span at residues 685–705; it reads LLLLQLIILACLLSCLLWLLF. The Cytoplasmic segment spans residues 706 to 763; it reads NIKGSKRKPQVQPTPVKTKKVSKKVPSQKPSPVPSPSLPQLRMPSRSASPTSSIKSTN. The interval 712-763 is disordered; that stretch reads RKPQVQPTPVKTKKVSKKVPSQKPSPVPSPSLPQLRMPSRSASPTSSIKSTN. The span at 751–763 shows a compositional bias: polar residues; the sequence is RSASPTSSIKSTN.

The protein resides in the membrane. May be involved in spermatogenesis and fertilization. Seems to be a non catalytic metalloprotease-like protein. The polypeptide is Disintegrin and metalloproteinase domain-containing protein 29 (Adam29) (Mus musculus (Mouse)).